The chain runs to 257 residues: 6-phosphogluconolactonase (257 aa).

At Ala2 the chain carries N-acetylalanine. Position 49 is a phosphoserine (Ser49). Position 180 is an N6-acetyllysine (Lys180).

Belongs to the glucosamine/galactosamine-6-phosphate isomerase family. 6-phosphogluconolactonase subfamily.

Its subcellular location is the cytoplasm. It catalyses the reaction 6-phospho-D-glucono-1,5-lactone + H2O = 6-phospho-D-gluconate + H(+). It participates in carbohydrate degradation; pentose phosphate pathway; D-ribulose 5-phosphate from D-glucose 6-phosphate (oxidative stage): step 2/3. In terms of biological role, hydrolysis of 6-phosphogluconolactone to 6-phosphogluconate. The chain is 6-phosphogluconolactonase from Rattus norvegicus (Rat).